We begin with the raw amino-acid sequence, 310 residues long: Upstream stimulatory factor 1 (310 aa).

Residues 1–17 (MKGQQKTAETEEGTVQI) are compositionally biased toward polar residues. Disordered regions lie at residues 1–26 (MKGQQKTAETEEGTVQIQEGAVATGE) and 171–209 (QGGSQRSIAPRTHPYSPKSEAPRTTRDEKRRAQHNEVER). The segment covering 190-209 (EAPRTTRDEKRRAQHNEVER) has biased composition (basic and acidic residues). One can recognise a bHLH domain in the interval 199–254 (KRRAQHNEVERRRRDKINNWIVQLSKIIPDCSMESTKSGQSKGGILSKACDYIQEL). The leucine-zipper stretch occupies residues 271–292 (LQLDNDVLRQQVEDLKNKNLLL). Lysine 306 is covalently cross-linked (Glycyl lysine isopeptide (Lys-Gly) (interchain with G-Cter in SUMO2)).

As to quaternary structure, efficient DNA binding requires dimerization with another bHLH protein. Binds DNA as a homodimer or a heterodimer (USF1/USF2).

Its subcellular location is the nucleus. Transcription factor that binds to a symmetrical DNA sequence (E-boxes) (5'-CACGTG-3') that is found in a variety of viral and cellular promoters. The chain is Upstream stimulatory factor 1 (Usf1) from Mus musculus (Mouse).